The following is a 515-amino-acid chain: Bifunctional purine biosynthesis protein PurH (515 aa).

In terms of domain architecture, MGS-like spans 1 to 145; it reads MTKRVLISVS…KNHASVTVVV (145 aa).

It belongs to the PurH family.

It catalyses the reaction (6R)-10-formyltetrahydrofolate + 5-amino-1-(5-phospho-beta-D-ribosyl)imidazole-4-carboxamide = 5-formamido-1-(5-phospho-D-ribosyl)imidazole-4-carboxamide + (6S)-5,6,7,8-tetrahydrofolate. The enzyme catalyses IMP + H2O = 5-formamido-1-(5-phospho-D-ribosyl)imidazole-4-carboxamide. The protein operates within purine metabolism; IMP biosynthesis via de novo pathway; 5-formamido-1-(5-phospho-D-ribosyl)imidazole-4-carboxamide from 5-amino-1-(5-phospho-D-ribosyl)imidazole-4-carboxamide (10-formyl THF route): step 1/1. It functions in the pathway purine metabolism; IMP biosynthesis via de novo pathway; IMP from 5-formamido-1-(5-phospho-D-ribosyl)imidazole-4-carboxamide: step 1/1. The chain is Bifunctional purine biosynthesis protein PurH from Streptococcus pneumoniae (strain Taiwan19F-14).